Reading from the N-terminus, the 881-residue chain is Beta-mannosidase (881 aa).

A signal peptide spans 1-18 (MHLHLLFLLALCGAGCMA). Asparagine 35, asparagine 77, asparagine 89, and asparagine 113 each carry an N-linked (GlcNAc...) asparagine glycan. A disulfide bond links cysteine 167 and cysteine 176. Residue 190-192 (WDW) coordinates substrate. Residues asparagine 226, asparagine 297, and asparagine 302 are each glycosylated (N-linked (GlcNAc...) asparagine). Asparagine 456 contacts substrate. Catalysis depends on glutamate 457, which acts as the Proton donor. Intrachain disulfides connect cysteine 540-cysteine 629, cysteine 732-cysteine 761, and cysteine 764-cysteine 769. The active-site Nucleophile is the glutamate 554. The N-linked (GlcNAc...) asparagine glycan is linked to asparagine 803.

This sequence belongs to the glycosyl hydrolase 2 family. As to quaternary structure, monomer.

The protein resides in the lysosome. It catalyses the reaction Hydrolysis of terminal, non-reducing beta-D-mannose residues in beta-D-mannosides.. It participates in glycan metabolism; N-glycan degradation. Functionally, exoglycosidase that cleaves the single beta-linked mannose residue from the non-reducing end of all N-linked glycoprotein oligosaccharides. This chain is Beta-mannosidase, found in Rattus norvegicus (Rat).